Consider the following 69-residue polypeptide: Antimicrobial peptide ISAMP (69 aa).

The N-terminal stretch at 1-23 (MRAVAIFIVTLLVLECVYFVMSE) is a signal peptide.

In terms of tissue distribution, expressed in the fat body, hemocytes and salivary glands of partially-fed female ticks. Not expressed in the midgut.

The protein localises to the secreted. In terms of biological role, has antimicrobial activity against B.cereus (MIC=5.8 ug/ml), B.subtilis (MIC=12.3 ug/ml), S.aureus (MIC=10.4 ug/ml), E.coli Edl 933 (MIC=3.2 ug/ml) and E.coli MG/655 (MIC=4.2 ug/ml). Non-hemolytic. The protein is Antimicrobial peptide ISAMP of Ixodes scapularis (Black-legged tick).